We begin with the raw amino-acid sequence, 191 residues long: ECF RNA polymerase sigma factor ShbA (191 aa).

Residues 27–98 (LLAHVHPLAL…HKVADLQRAA (72 aa)) are sigma-70 factor domain-2. The tract at residues 100 to 122 (RHPGSTAVPSDEMPERPDDSLGP) is disordered. Positions 112 to 122 (MPERPDDSLGP) are enriched in basic and acidic residues. Residues 138–187 (LLANLPENQRELLVLRVAVGLTAEETGQMLGMSPGAVRVAQHRALSRLRA) form a sigma-70 factor domain-4 region. The H-T-H motif DNA-binding region spans 160–179 (AEETGQMLGMSPGAVRVAQH).

Belongs to the sigma-70 factor family. ECF subfamily.

Sigma factors are initiation factors that promote the attachment of RNA polymerase to specific initiation sites and are then released. Extracytoplasmic function (ECF) sigma factors are held in an inactive form by an anti-sigma factor until released. This alternative sigma factor governs the transcription of the principal sigma factor HrdB (SigA) throughout growth. Acts by binding to the promoter region. The polypeptide is ECF RNA polymerase sigma factor ShbA (Streptomyces griseus subsp. griseus (strain JCM 4626 / CBS 651.72 / NBRC 13350 / KCC S-0626 / ISP 5235)).